A 232-amino-acid polypeptide reads, in one-letter code: Phosphoribosylformylglycinamidine synthase subunit PurQ (232 aa).

The 231-residue stretch at 2-232 (RIGVITFPGS…SVVRSTLVEA (231 aa)) folds into the Glutamine amidotransferase type-1 domain. Cys-85 acts as the Nucleophile in catalysis. Catalysis depends on residues His-194 and Glu-196.

In terms of assembly, part of the FGAM synthase complex composed of 1 PurL, 1 PurQ and 2 PurS subunits.

The protein resides in the cytoplasm. The enzyme catalyses N(2)-formyl-N(1)-(5-phospho-beta-D-ribosyl)glycinamide + L-glutamine + ATP + H2O = 2-formamido-N(1)-(5-O-phospho-beta-D-ribosyl)acetamidine + L-glutamate + ADP + phosphate + H(+). It carries out the reaction L-glutamine + H2O = L-glutamate + NH4(+). Its pathway is purine metabolism; IMP biosynthesis via de novo pathway; 5-amino-1-(5-phospho-D-ribosyl)imidazole from N(2)-formyl-N(1)-(5-phospho-D-ribosyl)glycinamide: step 1/2. Part of the phosphoribosylformylglycinamidine synthase complex involved in the purines biosynthetic pathway. Catalyzes the ATP-dependent conversion of formylglycinamide ribonucleotide (FGAR) and glutamine to yield formylglycinamidine ribonucleotide (FGAM) and glutamate. The FGAM synthase complex is composed of three subunits. PurQ produces an ammonia molecule by converting glutamine to glutamate. PurL transfers the ammonia molecule to FGAR to form FGAM in an ATP-dependent manner. PurS interacts with PurQ and PurL and is thought to assist in the transfer of the ammonia molecule from PurQ to PurL. The sequence is that of Phosphoribosylformylglycinamidine synthase subunit PurQ from Leifsonia xyli subsp. xyli (strain CTCB07).